A 265-amino-acid polypeptide reads, in one-letter code: Beta-lactamase OXA-48 (265 aa).

The N-terminal stretch at 1–22 is a signal peptide; it reads MRVLALSAVFLVASIIGMPAVA. Catalysis depends on serine 70, which acts as the Acyl-ester intermediate. Serine 70, lysine 73, serine 118, and arginine 250 together coordinate a beta-lactam. Residue lysine 73 is modified to N6-carboxylysine.

This sequence belongs to the class-D beta-lactamase family. Monomer. Dimer. In terms of processing, carboxylated on the epsilon-amino group of a lysine, with the resulting carbamate functional group serving as a general base. Probably N-carboxylated at Lys-73 at neutral pH in vivo and undergoes complete N-decarboxylation, at pH 4.1, in vitro.

It catalyses the reaction a beta-lactam + H2O = a substituted beta-amino acid. With respect to regulation, inhibited by avibactam, related diazabicyclooctane (DBO) derivatives and by bicyclic boronic acids, via a covalent binding to Ser-70. Inhibited by chloride, bromide and iodide ions. Not inhibited by the beta-lactamase-blocking agents, clavulanic acid or tazobactam. In terms of biological role, class D beta-lactamase which confers resistance to the beta-lactam antibiotics, including amoxicillin, and moderate resistance to cephalosporins and carbapenems such as cephalothin and imipenem; in the DH10B strain of E.coli. Acts via hydrolysis of the beta-lactam ring. Has oxacillin-, cephalothin- and imipenem-hydrolyzing activities. In Klebsiella pneumoniae, this protein is Beta-lactamase OXA-48.